The primary structure comprises 428 residues: MRYTKSEEAMKVAETLMPGGVNSPVRAFKSVDTPAIFMDHGKGSKIYDIDGNEYIDYVLSWGPLILGHRDPQVISHLHEAIDKGTSFGASTLLENKLAQLVIDRVPSIEKVRMVSSGTEATLDTLRLARGYTGRNKIVKFEGCYHGHSDSLLIKAGSGVATLGLPDSPGVPEGIAKNTITVPYNDLDALKIAFEKFGDDIAGVIVEPVAGNMGVVPPIEGFLQGLRDITTEYGALLIFDEVMTGFRVGYHCAQGYFGVTPDLTCLGKVIGGGLPVGAFGGKKEIMDHIAPLGNIYQAGTLSGNPLAMTSGYETLSQLTPETYEYFNMLGDILEDGLKRVFAKHNVPITVNRAGSMIGYFLNEGPVTNFEQANKSDLKLFAEMYREMAKEGVFLPPSQFEGTFLSTAHTKEDIEKTIQAFDTALSRIVK.

The residue at position 267 (Lys267) is an N6-(pyridoxal phosphate)lysine.

The protein belongs to the class-III pyridoxal-phosphate-dependent aminotransferase family. HemL subfamily. In terms of assembly, homodimer. It depends on pyridoxal 5'-phosphate as a cofactor.

Its subcellular location is the cytoplasm. It catalyses the reaction (S)-4-amino-5-oxopentanoate = 5-aminolevulinate. The protein operates within porphyrin-containing compound metabolism; protoporphyrin-IX biosynthesis; 5-aminolevulinate from L-glutamyl-tRNA(Glu): step 2/2. This is Glutamate-1-semialdehyde 2,1-aminomutase 1 from Staphylococcus aureus (strain Mu3 / ATCC 700698).